A 374-amino-acid chain; its full sequence is Glycerophosphodiester phosphodiesterase GDPD2 (374 aa).

A GP-PDE domain is found at 38-326 (FSVIGHRGIG…DFVEEIIEST (289 aa)). Residues 330–349 (MIRPPPSSSPLPSPSKDDDV) form a disordered region. Residues 332-342 (RPPPSSSPLPS) show a composition bias toward pro residues.

Belongs to the glycerophosphoryl diester phosphodiesterase family. Expressed in roots, shoots, flowers and siliques.

The enzyme catalyses a sn-glycero-3-phosphodiester + H2O = an alcohol + sn-glycerol 3-phosphate + H(+). The sequence is that of Glycerophosphodiester phosphodiesterase GDPD2 from Arabidopsis thaliana (Mouse-ear cress).